Reading from the N-terminus, the 126-residue chain is Large ribosomal subunit protein bL12 (126 aa).

It belongs to the bacterial ribosomal protein bL12 family. In terms of assembly, homodimer. Part of the ribosomal stalk of the 50S ribosomal subunit. Forms a multimeric L10(L12)X complex, where L10 forms an elongated spine to which 2 to 4 L12 dimers bind in a sequential fashion. Binds GTP-bound translation factors.

Its function is as follows. Forms part of the ribosomal stalk which helps the ribosome interact with GTP-bound translation factors. Is thus essential for accurate translation. This is Large ribosomal subunit protein bL12 from Francisella tularensis subsp. mediasiatica (strain FSC147).